A 270-amino-acid polypeptide reads, in one-letter code: Fibroblast growth factor 5 (270 aa).

An N-terminal signal peptide occupies residues 1 to 20 (MSLSFLLLLFLSHLILSAWA). The segment at 26-83 (LAPKGQPGPAATGRNPAGASSSRSSRGTTSSSSSSVSSSHSASLGNQGSGLEQSSFQW) is disordered. A compositionally biased stretch (low complexity) spans 43-68 (GASSSRSSRGTTSSSSSSVSSSHSAS). Residues 69–83 (LGNQGSGLEQSSFQW) show a composition bias toward polar residues. The N-linked (GlcNAc...) asparagine glycan is linked to asparagine 112. The tract at residues 236-257 (PEKKKPPSPVKPKVPLSAPRKS) is disordered.

It belongs to the heparin-binding growth factors family. In terms of assembly, interacts with FGFR1 and FGFR2. Affinity between fibroblast growth factors (FGFs) and their receptors is increased by heparan sulfate glycosaminoglycans that function as coreceptors. In terms of tissue distribution, expressed in skin.

Its subcellular location is the secreted. In terms of biological role, plays an important role in the regulation of cell proliferation and cell differentiation. Required for normal regulation of the hair growth cycle. Functions as an inhibitor of hair elongation by promoting progression from anagen, the growth phase of the hair follicle, into catagen the apoptosis-induced regression phase. The polypeptide is Fibroblast growth factor 5 (FGF5) (Felis catus (Cat)).